We begin with the raw amino-acid sequence, 264 residues long: Thymidylate synthase (264 aa).

Arg21 contacts dUMP. His51 contributes to the (6R)-5,10-methylene-5,6,7,8-tetrahydrofolate binding site. 126 to 127 is a binding site for dUMP; it reads RR. Residue Cys146 is the Nucleophile of the active site. DUMP is bound by residues 166 to 169, Asn177, and 207 to 209; these read RSCD and HLY. Position 169 (Asp169) interacts with (6R)-5,10-methylene-5,6,7,8-tetrahydrofolate. Ser263 is a (6R)-5,10-methylene-5,6,7,8-tetrahydrofolate binding site.

The protein belongs to the thymidylate synthase family. Bacterial-type ThyA subfamily. As to quaternary structure, homodimer.

The protein localises to the cytoplasm. It catalyses the reaction dUMP + (6R)-5,10-methylene-5,6,7,8-tetrahydrofolate = 7,8-dihydrofolate + dTMP. It functions in the pathway pyrimidine metabolism; dTTP biosynthesis. In terms of biological role, catalyzes the reductive methylation of 2'-deoxyuridine-5'-monophosphate (dUMP) to 2'-deoxythymidine-5'-monophosphate (dTMP) while utilizing 5,10-methylenetetrahydrofolate (mTHF) as the methyl donor and reductant in the reaction, yielding dihydrofolate (DHF) as a by-product. This enzymatic reaction provides an intracellular de novo source of dTMP, an essential precursor for DNA biosynthesis. The polypeptide is Thymidylate synthase (Buchnera aphidicola subsp. Acyrthosiphon pisum (strain APS) (Acyrthosiphon pisum symbiotic bacterium)).